Reading from the N-terminus, the 665-residue chain is Pre-mRNA-processing factor 39 (665 aa).

Over residues 1-11 (MQNSHMEEYRN) the composition is skewed to basic and acidic residues. The interval 1–28 (MQNSHMEEYRNSDNGSTGNSSEVAVVEH) is disordered. Positions 12 to 22 (SDNGSTGNSSE) are enriched in polar residues. A Phosphoserine modification is found at Ser44. HAT repeat units follow at residues 107–139 (NHLM…LEKR), 141–173 (DNIK…FLKE), 181–216 (ETNT…WENE), 218–251 (GNLR…HVQN), 331–363 (FEEG…FEIE), 365–397 (GTHE…YMEN), and 402–434 (GVRH…QQGN). The segment covering 599–622 (QDTLKRKAENGSEEPEEKKAHTED) has biased composition (basic and acidic residues). Residues 599 to 625 (QDTLKRKAENGSEEPEEKKAHTEDLSS) are disordered.

Belongs to the PRP39 family.

It localises to the nucleus. Functionally, involved in pre-mRNA splicing. The sequence is that of Pre-mRNA-processing factor 39 (Prpf39) from Mus musculus (Mouse).